The primary structure comprises 250 residues: Undecaprenyl-diphosphatase (250 aa).

Transmembrane regions (helical) follow at residues 35-55, 73-93, 100-120, 146-166, 171-191, 200-220, and 229-249; these read DLSV…IFVG, INLT…GVLL, SLSN…ALLI, ALAI…SLLI, EIAL…AGLL, SYSI…LFIL, and LKIF…LGGI.

Belongs to the UppP family.

The protein resides in the cell inner membrane. It carries out the reaction di-trans,octa-cis-undecaprenyl diphosphate + H2O = di-trans,octa-cis-undecaprenyl phosphate + phosphate + H(+). In terms of biological role, catalyzes the dephosphorylation of undecaprenyl diphosphate (UPP). Confers resistance to bacitracin. This is Undecaprenyl-diphosphatase from Thermosipho melanesiensis (strain DSM 12029 / CIP 104789 / BI429).